A 616-amino-acid polypeptide reads, in one-letter code: Dihydroxy-acid dehydratase (616 aa).

Mg(2+) is bound at residue D81. Residue C122 coordinates [2Fe-2S] cluster. Mg(2+) is bound by residues D123 and K124. K124 carries the N6-carboxylysine modification. Residue C195 coordinates [2Fe-2S] cluster. A Mg(2+)-binding site is contributed by E491. The active-site Proton acceptor is S517.

The protein belongs to the IlvD/Edd family. As to quaternary structure, homodimer. Requires [2Fe-2S] cluster as cofactor. Mg(2+) serves as cofactor.

It catalyses the reaction (2R)-2,3-dihydroxy-3-methylbutanoate = 3-methyl-2-oxobutanoate + H2O. The catalysed reaction is (2R,3R)-2,3-dihydroxy-3-methylpentanoate = (S)-3-methyl-2-oxopentanoate + H2O. It participates in amino-acid biosynthesis; L-isoleucine biosynthesis; L-isoleucine from 2-oxobutanoate: step 3/4. Its pathway is amino-acid biosynthesis; L-valine biosynthesis; L-valine from pyruvate: step 3/4. Its function is as follows. Functions in the biosynthesis of branched-chain amino acids. Catalyzes the dehydration of (2R,3R)-2,3-dihydroxy-3-methylpentanoate (2,3-dihydroxy-3-methylvalerate) into 2-oxo-3-methylpentanoate (2-oxo-3-methylvalerate) and of (2R)-2,3-dihydroxy-3-methylbutanoate (2,3-dihydroxyisovalerate) into 2-oxo-3-methylbutanoate (2-oxoisovalerate), the penultimate precursor to L-isoleucine and L-valine, respectively. The protein is Dihydroxy-acid dehydratase of Escherichia coli O157:H7 (strain EC4115 / EHEC).